Here is a 51-residue protein sequence, read N- to C-terminus: uncharacterized protein (51 aa).

The protein to E.coli YdaF.

This is an uncharacterized protein from Escherichia coli O157:H7.